Reading from the N-terminus, the 1563-residue chain is Galactose-specific cell agglutination protein gsf2 (1563 aa).

The N-terminal stretch at 1 to 27 (MSVRRFLSTSARALLFTAALLPSLTSG) is a signal peptide. 29 tandem repeats follow at residues 203–280 (TTTT…PTTV), 281–358 (TTTT…PTTV), 359–436 (TTTT…PTTV), 437–514 (TTTT…PTTV), 515–592 (TTTT…PTTV), 593–670 (TTTT…PTTV), 671–750 (TTTT…VSAT), 751–825 (TTTT…GTTT), 826–869 (VVIQ…GTTT), 870–913 (VVIQ…GTTT), 914–957 (VVIQ…GTTT), 958–1001 (VVIQ…GTTT), 1002–1045 (VVIQ…GTTT), 1046–1089 (VVIQ…GTTT), 1090–1133 (VVIQ…GTTT), 1134–1140 (VVINTPT), 1141–1162 (TTGS…ETQL), 1163–1184 (TTAT…ETQV), 1185–1200 (TTGT…ETQA), 1201–1221 (TTAT…TETQ), 1223–1244 (TTAT…ETQV), 1245–1266 (TTAT…ETQV), 1267–1282 (TTGT…ETQA), 1283–1304 (TTAT…ETQA), 1305–1326 (TTAT…ETQV), 1327–1348 (TTAT…ETQV), 1349–1364 (TTGT…ETQA), 1365–1386 (TTAT…ETQV), and 1387–1397 (TTATEVQPTTA). Residues 203–825 (TTTTTVGYPG…IPTGTTGTTT (623 aa)) form an 8 X 78 AA approximate tandem repeats region. Residues Asn-224, Asn-263, Asn-302, Asn-341, Asn-380, Asn-419, Asn-458, Asn-497, Asn-536, Asn-575, Asn-614, and Asn-653 are each glycosylated (N-linked (GlcNAc...) asparagine). Residue Asn-784 is glycosylated (N-linked (GlcNAc...) asparagine). An 8 X 44 AA approximate tandem repeats region spans residues 826-1140 (VVIQTPTTVT…TTTVVINTPT (315 aa)). The disordered stretch occupies residues 1135–1393 (VINTPTTTGS…TQVTTATEVQ (259 aa)). The 13 X 22 AA approximate tandem repeats stretch occupies residues 1141–1397 (TTGSEVLPTT…TATEVQPTTA (257 aa)). 4 N-linked (GlcNAc...) asparagine glycosylation sites follow: Asn-1510, Asn-1516, Asn-1529, and Asn-1532. The GPI-anchor amidated serine moiety is linked to residue Ser-1539. Residues 1540 to 1563 (SAGANKPIAYLTFVSLFVYIVTLI) constitute a propeptide, removed in mature form.

This sequence belongs to the mam3/map4 family.

Its subcellular location is the cell membrane. Its function is as follows. Galactose-specific adhesion protein essential for non-sexual flocculation and filamentous growth. Required for adhesion and filamentous growth through recognition of galactose residues on cell surface glycoconjugates. Induces flocculation when overexpressed. In Schizosaccharomyces pombe (strain 972 / ATCC 24843) (Fission yeast), this protein is Galactose-specific cell agglutination protein gsf2.